A 291-amino-acid chain; its full sequence is Shikimate dehydrogenase (NADP(+)) (291 aa).

Residues 26–28 (SLS) and S73 contribute to the shikimate site. K77 serves as the catalytic Proton acceptor. Residues N98 and D113 each contribute to the shikimate site. NADP(+)-binding positions include 137–141 (GAGGA) and V238. Position 240 (Y240) interacts with shikimate. G261 provides a ligand contact to NADP(+).

It belongs to the shikimate dehydrogenase family. In terms of assembly, homodimer.

It carries out the reaction shikimate + NADP(+) = 3-dehydroshikimate + NADPH + H(+). The protein operates within metabolic intermediate biosynthesis; chorismate biosynthesis; chorismate from D-erythrose 4-phosphate and phosphoenolpyruvate: step 4/7. Involved in the biosynthesis of the chorismate, which leads to the biosynthesis of aromatic amino acids. Catalyzes the reversible NADPH linked reduction of 3-dehydroshikimate (DHSA) to yield shikimate (SA). The chain is Shikimate dehydrogenase (NADP(+)) from Listeria monocytogenes serotype 4b (strain F2365).